A 279-amino-acid polypeptide reads, in one-letter code: Energy-coupling factor transporter ATP-binding protein EcfA (279 aa).

One can recognise an ABC transporter domain in the interval 4 to 239; that stretch reads VETKDLYFRY…VETIRKANLR (236 aa). ATP is bound at residue 37-44; it reads GPNGAGKS.

This sequence belongs to the ABC transporter superfamily. Energy-coupling factor EcfA family. As to quaternary structure, forms a stable energy-coupling factor (ECF) transporter complex composed of 2 membrane-embedded substrate-binding proteins (S component), 2 ATP-binding proteins (A component) and 2 transmembrane proteins (T component).

It localises to the cell membrane. Its function is as follows. ATP-binding (A) component of a common energy-coupling factor (ECF) ABC-transporter complex. Unlike classic ABC transporters this ECF transporter provides the energy necessary to transport a number of different substrates. The chain is Energy-coupling factor transporter ATP-binding protein EcfA from Methanocaldococcus jannaschii (strain ATCC 43067 / DSM 2661 / JAL-1 / JCM 10045 / NBRC 100440) (Methanococcus jannaschii).